The sequence spans 591 residues: NADH-quinone oxidoreductase subunit C/D (591 aa).

An NADH dehydrogenase I subunit C region spans residues 1–182 (MVTVVENTDP…TPYFLNTAKQ (182 aa)). The interval 206-591 (DFMFLNIGPN…IDIVMADCDR (386 aa)) is NADH dehydrogenase I subunit D.

It in the N-terminal section; belongs to the complex I 30 kDa subunit family. The protein in the C-terminal section; belongs to the complex I 49 kDa subunit family. NDH-1 is composed of 13 different subunits. Subunits NuoB, CD, E, F, and G constitute the peripheral sector of the complex.

It localises to the cell inner membrane. The enzyme catalyses a quinone + NADH + 5 H(+)(in) = a quinol + NAD(+) + 4 H(+)(out). NDH-1 shuttles electrons from NADH, via FMN and iron-sulfur (Fe-S) centers, to quinones in the respiratory chain. The immediate electron acceptor for the enzyme in this species is believed to be ubiquinone. Couples the redox reaction to proton translocation (for every two electrons transferred, four hydrogen ions are translocated across the cytoplasmic membrane), and thus conserves the redox energy in a proton gradient. The protein is NADH-quinone oxidoreductase subunit C/D of Psychrobacter cryohalolentis (strain ATCC BAA-1226 / DSM 17306 / VKM B-2378 / K5).